The primary structure comprises 148 residues: Sec-independent protein translocase protein TatB (148 aa).

The helical transmembrane segment at 1-21 threads the bilayer; that stretch reads MFGISFSELLLVGLVALLVLG. Positions 85 to 148 are disordered; the sequence is EPTPVEHVGE…NDTTQPPRAP (64 aa). Residues 107–148 are compositionally biased toward low complexity; sequence APAVAPTESAPVVAPASVEHVAQTAAPTTPAPNDTTQPPRAP.

The protein belongs to the TatB family. In terms of assembly, the Tat system comprises two distinct complexes: a TatABC complex, containing multiple copies of TatA, TatB and TatC subunits, and a separate TatA complex, containing only TatA subunits. Substrates initially bind to the TatABC complex, which probably triggers association of the separate TatA complex to form the active translocon.

The protein resides in the cell inner membrane. Part of the twin-arginine translocation (Tat) system that transports large folded proteins containing a characteristic twin-arginine motif in their signal peptide across membranes. Together with TatC, TatB is part of a receptor directly interacting with Tat signal peptides. TatB may form an oligomeric binding site that transiently accommodates folded Tat precursor proteins before their translocation. The sequence is that of Sec-independent protein translocase protein TatB from Pseudomonas fluorescens (strain Pf0-1).